The following is an 86-amino-acid chain: Collagen alpha-1(XII) chain (86 aa).

The span at 1–12 shows a compositional bias: pro residues; sequence NQPGPPGPPGPP. The interval 1–86 is disordered; sequence NQPGPPGPPG…PGRPGDSGIR (86 aa). Pro-6, Pro-9, Pro-12, Pro-18, Pro-24, Pro-27, Pro-30, Pro-42, Pro-51, Pro-54, Pro-65, Pro-74, Pro-77, and Pro-80 each carry hydroxyproline. The segment covering 16–25 has biased composition (gly residues); it reads GEPGPGGRPG. Positions 35–50 are enriched in low complexity; the sequence is PQGERGLPGEXGERGL. Positions 57 to 71 are enriched in low complexity; the sequence is QGESRTGPPGSTGSR.

It belongs to the fibril-associated collagens with interrupted helices (FACIT) family. In terms of assembly, trimer of identical chains each containing 190 kDa of non-triple-helical sequences. In terms of processing, the triple-helical tail is stabilized by disulfide bonds at each end. Prolines at the third position of the tripeptide repeating unit (G-X-Y) are hydroxylated in some or all of the chains.

Its subcellular location is the secreted. The protein localises to the extracellular space. It is found in the extracellular matrix. Type XII collagen interacts with type I collagen-containing fibrils, the COL1 domain could be associated with the surface of the fibrils, and the COL2 and NC3 domains may be localized in the perifibrillar matrix. The polypeptide is Collagen alpha-1(XII) chain (COL12A1) (Bos taurus (Bovine)).